The following is a 642-amino-acid chain: Threonine--tRNA ligase (642 aa).

Positions 1 to 61 constitute a TGS domain; sequence MPVITLPDGS…HEDASLSIIT (61 aa). Residues 243–534 form a catalytic region; it reads DHRKIGKQLD…LIEEYAGRFP (292 aa). The Zn(2+) site is built by Cys-334, His-385, and His-511.

This sequence belongs to the class-II aminoacyl-tRNA synthetase family. Homodimer. It depends on Zn(2+) as a cofactor.

The protein resides in the cytoplasm. The enzyme catalyses tRNA(Thr) + L-threonine + ATP = L-threonyl-tRNA(Thr) + AMP + diphosphate + H(+). Catalyzes the attachment of threonine to tRNA(Thr) in a two-step reaction: L-threonine is first activated by ATP to form Thr-AMP and then transferred to the acceptor end of tRNA(Thr). Also edits incorrectly charged L-seryl-tRNA(Thr). This Shewanella amazonensis (strain ATCC BAA-1098 / SB2B) protein is Threonine--tRNA ligase.